The following is a 617-amino-acid chain: pH-sensitive chloride channel 2 (617 aa).

Positions 1 to 28 are cleaved as a signal peptide; the sequence is MHSPGAAAYVFLQCLVALVAAVIAQSGA. The Extracellular portion of the chain corresponds to 29-387; that stretch reads DQPPTTVVEV…VHLAREMGFY (359 aa). The N-linked (GlcNAc...) asparagine glycan is linked to N57. Positions 82–96 are enriched in low complexity; it reads TVSVDSSSTTTVAST. Residues 82-110 form a disordered region; that stretch reads TVSVDSSSTTTVASTQEPTSTTERTMSPE. The span at 97 to 106 shows a compositional bias: polar residues; that stretch reads QEPTSTTERT. N130 is a glycosylation site (N-linked (GlcNAc...) asparagine). Residues 131–147 show a composition bias toward basic and acidic residues; that stretch reads ATDDNRPDAKSSGKDSE. A disordered region spans residues 131 to 155; sequence ATDDNRPDAKSSGKDSECPTLEGAD. Residues N184, N234, N351, and N370 are each glycosylated (N-linked (GlcNAc...) asparagine). Residues 388 to 408 form a helical membrane-spanning segment; sequence MMDYFIPSIMLVAISWVTFWL. Over 409–414 the chain is Cytoplasmic; it reads QADQSA. A helical transmembrane segment spans residues 415–434; that stretch reads PRITLGTSTMLTFITLASAQ. Residues 435–447 lie on the Extracellular side of the membrane; that stretch reads GKTLPKVSYIKAS. A helical transmembrane segment spans residues 448 to 468; it reads EIWFLGCTGFIFGSLVEFAFV. Topologically, residues 469 to 596 are cytoplasmic; sequence NTIWRRKRNV…VAIWIDKRSR (128 aa). A helical transmembrane segment spans residues 597–617; sequence FVFPIAFVIFNIFYWTFVYYV.

It belongs to the ligand-gated ion channel (TC 1.A.9) family.

Its subcellular location is the cell membrane. It carries out the reaction chloride(in) = chloride(out). Functionally, ligand and pH-gated channel that mediates chloride transport in the mid-gut and thereby may function in larval metabolism and fluid homeostasis. Channel opening is triggered by zinc binding or, to a lesser extent, an increase in extracellular pH. This Anopheles gambiae (African malaria mosquito) protein is pH-sensitive chloride channel 2.